Reading from the N-terminus, the 91-residue chain is DNA-directed RNA polymerase subunit omega (91 aa).

This sequence belongs to the RNA polymerase subunit omega family. The RNAP catalytic core consists of 2 alpha, 1 beta, 1 beta' and 1 omega subunit. When a sigma factor is associated with the core the holoenzyme is formed, which can initiate transcription.

It carries out the reaction RNA(n) + a ribonucleoside 5'-triphosphate = RNA(n+1) + diphosphate. Functionally, promotes RNA polymerase assembly. Latches the N- and C-terminal regions of the beta' subunit thereby facilitating its interaction with the beta and alpha subunits. This Pectobacterium carotovorum subsp. carotovorum (strain PC1) protein is DNA-directed RNA polymerase subunit omega.